A 420-amino-acid chain; its full sequence is UDP-N-acetylglucosamine 1-carboxyvinyltransferase (420 aa).

A phosphoenolpyruvate-binding site is contributed by 22-23 (KN). Residue R91 participates in UDP-N-acetyl-alpha-D-glucosamine binding. Residue C115 is the Proton donor of the active site. Position 115 is a 2-(S-cysteinyl)pyruvic acid O-phosphothioketal (C115). Residues 120–124 (RPVDL), 160–163 (KVSV), D305, and I327 each bind UDP-N-acetyl-alpha-D-glucosamine.

The protein belongs to the EPSP synthase family. MurA subfamily.

Its subcellular location is the cytoplasm. The catalysed reaction is phosphoenolpyruvate + UDP-N-acetyl-alpha-D-glucosamine = UDP-N-acetyl-3-O-(1-carboxyvinyl)-alpha-D-glucosamine + phosphate. It functions in the pathway cell wall biogenesis; peptidoglycan biosynthesis. Functionally, cell wall formation. Adds enolpyruvyl to UDP-N-acetylglucosamine. This Proteus mirabilis (strain HI4320) protein is UDP-N-acetylglucosamine 1-carboxyvinyltransferase.